The sequence spans 824 residues: Serine/threonine-protein kinase SCH9 (824 aa).

A compositionally biased stretch (polar residues) spans Met1–Pro23. 4 disordered regions span residues Met1–Gly37, Asn125–Thr152, Glu221–Pro272, and Thr285–Ile327. Over residues Asn24–Gly37 the composition is skewed to low complexity. Residues Gln166 to His378 form the C2 domain. The span at Ile226–Asn248 shows a compositional bias: low complexity. Polar residues-rich tracts occupy residues Glu249–Pro272 and His286–Thr302. Residues Arg307–Asn321 are compositionally biased toward low complexity. One can recognise a Protein kinase domain in the interval Phe412–Phe671. ATP-binding positions include Leu418–Val426 and Lys441. The active-site Proton acceptor is Asp538. Phosphothreonine; by PKH1 or PKH2 is present on Thr570. In terms of domain architecture, AGC-kinase C-terminal spans Ala672–Val748. The residue at position 711 (Ser711) is a Phosphoserine; by TORC1. The residue at position 723 (Thr723) is a Phosphothreonine; by TORC1. At Ser726 the chain carries Phosphoserine; by TORC1. The residue at position 737 (Thr737) is a Phosphothreonine; by TORC1. A phosphoserine; by TORC1 mark is found at Ser758 and Ser765.

The protein belongs to the protein kinase superfamily. AGC Ser/Thr protein kinase family. cAMP subfamily. Phosphorylated by TORC1 in nutrient-replete conditions and during mechanical stress.

The enzyme catalyses L-seryl-[protein] + ATP = O-phospho-L-seryl-[protein] + ADP + H(+). The catalysed reaction is L-threonyl-[protein] + ATP = O-phospho-L-threonyl-[protein] + ADP + H(+). Activated by cAMP. Functionally, protein kinase that is part of growth control pathway which is at least partially redundant with the cAMP pathway. Regulates both BCY1 phosphorylation and MPK1 activity. Regulates ribosome biogenesis, translation initiation, and entry into stationary phase in a TORC1-dependent manner. In Saccharomyces cerevisiae (strain ATCC 204508 / S288c) (Baker's yeast), this protein is Serine/threonine-protein kinase SCH9 (SCH9).